Here is a 542-residue protein sequence, read N- to C-terminus: CTP synthase (542 aa).

The amidoligase domain stretch occupies residues 1-265; sequence MARYVFITGG…DNEVLAAFGI (265 aa). A CTP-binding site is contributed by serine 13. A UTP-binding site is contributed by serine 13. ATP contacts are provided by residues 14–19 and aspartate 71; that span reads SLGKGI. Residues aspartate 71 and glutamate 139 each contribute to the Mg(2+) site. CTP-binding positions include 146–148, 186–191, and lysine 222; these read DIE and KTKPTQ. UTP contacts are provided by residues 186–191 and lysine 222; that span reads KTKPTQ. The 251-residue stretch at 291 to 541 folds into the Glutamine amidotransferase type-1 domain; that stretch reads TIAIVGKYTG…IEAALEQSRL (251 aa). Glycine 353 contacts L-glutamine. The active-site Nucleophile; for glutamine hydrolysis is cysteine 380. L-glutamine-binding positions include 381–384, glutamate 404, and arginine 469; that span reads FGMQ. Residues histidine 514 and glutamate 516 contribute to the active site.

The protein belongs to the CTP synthase family. In terms of assembly, homotetramer.

The enzyme catalyses UTP + L-glutamine + ATP + H2O = CTP + L-glutamate + ADP + phosphate + 2 H(+). The catalysed reaction is L-glutamine + H2O = L-glutamate + NH4(+). It carries out the reaction UTP + NH4(+) + ATP = CTP + ADP + phosphate + 2 H(+). Its pathway is pyrimidine metabolism; CTP biosynthesis via de novo pathway; CTP from UDP: step 2/2. With respect to regulation, allosterically activated by GTP, when glutamine is the substrate; GTP has no effect on the reaction when ammonia is the substrate. The allosteric effector GTP functions by stabilizing the protein conformation that binds the tetrahedral intermediate(s) formed during glutamine hydrolysis. Inhibited by the product CTP, via allosteric rather than competitive inhibition. Functionally, catalyzes the ATP-dependent amination of UTP to CTP with either L-glutamine or ammonia as the source of nitrogen. Regulates intracellular CTP levels through interactions with the four ribonucleotide triphosphates. This is CTP synthase from Sinorhizobium medicae (strain WSM419) (Ensifer medicae).